The sequence spans 406 residues: Leucine aminopeptidase 1 (406 aa).

A signal peptide spans 1–18 (MKVTNASLLALLLPAVSG). Positions 19–94 (RFVETGEPDR…LRAMTASRKK (76 aa)) are excised as a propeptide. The N-linked (GlcNAc...) asparagine glycan is linked to asparagine 186. Residues histidine 194, aspartate 213, glutamate 252, and aspartate 279 each coordinate Zn(2+). The N-linked (GlcNAc...) asparagine glycan is linked to asparagine 306. A disulfide bridge links cysteine 328 with cysteine 332. Histidine 361 contacts Zn(2+).

The protein belongs to the peptidase M28 family. M28E subfamily. Monomer. It depends on Zn(2+) as a cofactor.

Its subcellular location is the secreted. Extracellular aminopeptidase that allows assimilation of proteinaceous substrates. This chain is Leucine aminopeptidase 1 (LAP1), found in Chaetomium globosum (strain ATCC 6205 / CBS 148.51 / DSM 1962 / NBRC 6347 / NRRL 1970) (Soil fungus).